The following is a 117-amino-acid chain: NADH-ubiquinone oxidoreductase chain 3 (117 aa).

Helical transmembrane passes span 5–25 (ALSS…AWVL), 57–77 (FFLL…LMPL), and 86–106 (VFTT…GLIH).

The protein belongs to the complex I subunit 3 family.

Its subcellular location is the mitochondrion membrane. The enzyme catalyses a ubiquinone + NADH + 5 H(+)(in) = a ubiquinol + NAD(+) + 4 H(+)(out). Its function is as follows. Core subunit of the mitochondrial membrane respiratory chain NADH dehydrogenase (Complex I) that is believed to belong to the minimal assembly required for catalysis. Complex I functions in the transfer of electrons from NADH to the respiratory chain. The immediate electron acceptor for the enzyme is believed to be ubiquinone. The chain is NADH-ubiquinone oxidoreductase chain 3 (ND3) from Lumbricus terrestris (Common earthworm).